The following is a 176-amino-acid chain: Small ribosomal subunit protein uS5 (176 aa).

The S5 DRBM domain maps to 15 to 78; sequence FEERIVEIRR…SAARRNVFEV (64 aa).

Belongs to the universal ribosomal protein uS5 family. Part of the 30S ribosomal subunit. Contacts proteins S4 and S8.

Its function is as follows. With S4 and S12 plays an important role in translational accuracy. Located at the back of the 30S subunit body where it stabilizes the conformation of the head with respect to the body. The sequence is that of Small ribosomal subunit protein uS5 from Thermosipho africanus (strain TCF52B).